We begin with the raw amino-acid sequence, 241 residues long: ATP synthase subunit a (241 aa).

8 helical membrane passes run 29–49, 54–74, 86–106, 114–134, 153–173, 177–197, 200–220, and 221–241; these read NSSLFMMISVILVILFLLFGI, VIPGYLQAAVEYVYDFVISII, IPLIFTVFIFILSCNLVGVLP, HVIVTFALSMVVFIYITIVGF, WLAPIIIIIKLFAYLVRPVSL, LAANMIAGHTIIKVIAGFIVN, IFFTPAPFLFIIALIGFEVFV, and AILQAYIFTILTCVYLSDAVK.

The protein belongs to the ATPase A chain family. As to quaternary structure, F-type ATPases have 2 components, CF(1) - the catalytic core - and CF(0) - the membrane proton channel. CF(1) has five subunits: alpha(3), beta(3), gamma(1), delta(1), epsilon(1). CF(0) has three main subunits: a(1), b(2) and c(9-12). The alpha and beta chains form an alternating ring which encloses part of the gamma chain. CF(1) is attached to CF(0) by a central stalk formed by the gamma and epsilon chains, while a peripheral stalk is formed by the delta and b chains.

The protein resides in the cell inner membrane. In terms of biological role, key component of the proton channel; it plays a direct role in the translocation of protons across the membrane. This is ATP synthase subunit a from Wolbachia sp. subsp. Drosophila simulans (strain wRi).